The primary structure comprises 394 residues: NAD(P)H-quinone oxidoreductase subunit H (394 aa).

The protein belongs to the complex I 49 kDa subunit family. As to quaternary structure, NDH-1 can be composed of about 15 different subunits; different subcomplexes with different compositions have been identified which probably have different functions.

The protein localises to the cellular thylakoid membrane. It catalyses the reaction a plastoquinone + NADH + (n+1) H(+)(in) = a plastoquinol + NAD(+) + n H(+)(out). The catalysed reaction is a plastoquinone + NADPH + (n+1) H(+)(in) = a plastoquinol + NADP(+) + n H(+)(out). Its function is as follows. NDH-1 shuttles electrons from an unknown electron donor, via FMN and iron-sulfur (Fe-S) centers, to quinones in the respiratory and/or the photosynthetic chain. The immediate electron acceptor for the enzyme in this species is believed to be plastoquinone. Couples the redox reaction to proton translocation, and thus conserves the redox energy in a proton gradient. Cyanobacterial NDH-1 also plays a role in inorganic carbon-concentration. This chain is NAD(P)H-quinone oxidoreductase subunit H, found in Parasynechococcus marenigrum (strain WH8102).